The following is a 440-amino-acid chain: FAD-dependent monooxygenase FVEG_08293 (440 aa).

Residues 7-26 (EFNVAIVGAGVAGLALAMAL) traverse the membrane as a helical segment. FAD-binding residues include E37 and G50. A glycan (N-linked (GlcNAc...) asparagine) is linked at N77. Residue R122 participates in FAD binding. Catalysis depends on residues R203 and Y235. Residues D317 and A330 each coordinate FAD.

This sequence belongs to the paxM FAD-dependent monooxygenase family. The cofactor is FAD.

The protein localises to the membrane. Functionally, FAD-dependent monooxygenase; part of the Fusarium detoxification of benzoxazolinone cluster 1 (FDB1) involved in the degradation of benzoxazolinones produced by the host plant. Maize, wheat, and rye produce the 2 benzoxazinone phytoanticipins 2,4-dihy-droxy-7-methoxy-1,4-benzoxazin-3-one (DIMBOA) and 2,4-dihydroxy-1,4-benzoxazin-3-one (DIBOA) that, due to their inherent instability once released, spontaneously degrade to the more stable corresponding benzoxazolinones, 6-methoxy-2-benzoxazolinone (MBOA) and 2-benzoxazolinone (BOA), respectively. The first step in the detoxification of benzoxazolinones involves the hydrolysis of the cyclic ester bond of benzoxazolinones by the FDB1 cluster gamma-lactamase MBL1 to aminophenols. MBL1 is able to convert BOA into 2-aminophenol (2-AP), as well as MBOA into 5-methoxy-2-aminophenol (2-AMP). The FDB2 cluster N-malonyltransferase FDB2/NAT1 then metabolizes aminophenols via N-malonylation to non-toxic malonamic acids. FDB2/NAT1 converts 2-AP into N-(2-hydroxyphenyl) malonamic acid (HPMA) and 2-AMP into N-(2-hydroxy-4-methoxyphenyl) malonamic acid (HMPMA). The duplicated dienlactone hydrolases DLH1 and DLH2 may provide redundant function for hydrolyzing the lactone moiety in the BOA molecule. The roles of the amidases an other enzymes encoded by the 2 FDB clusters have not been identified so far. This is FAD-dependent monooxygenase FVEG_08293 from Gibberella moniliformis (strain M3125 / FGSC 7600) (Maize ear and stalk rot fungus).